Here is a 349-residue protein sequence, read N- to C-terminus: MISVGIVGGTGYTGVELLRILLRHPKAQVRVLTSRTEAGKPVADMFPNLRGHTDLHFSDLNIDALKECDVVFFATPHGVAMQHAKDLIAAGTKVIDLAADFRLQNLEQFEKWYGMEHACPDVLKDSVYGLTELNREKIKQAQVIGNPGCYPTTVQLGLAPLLKSAQALIETKNIIIDAKSGVSGAGRKASLGMIYSENADNFKAYGVAGHRHHPEIVEALENIAGKKDVFEGLLFVPHLVPMIRGMLSTIYVDLTEAGKQTDLQALYENFYANEKFVDVMPANSSPETRSVRGANELRIALYKPQPNKLIILAAQDNLVKGASGQAVQNMNLMFGFNEDEGLQGIGLLP.

Residue cysteine 149 is part of the active site.

The protein belongs to the NAGSA dehydrogenase family. Type 1 subfamily.

Its subcellular location is the cytoplasm. The enzyme catalyses N-acetyl-L-glutamate 5-semialdehyde + phosphate + NADP(+) = N-acetyl-L-glutamyl 5-phosphate + NADPH + H(+). It functions in the pathway amino-acid biosynthesis; L-arginine biosynthesis; N(2)-acetyl-L-ornithine from L-glutamate: step 3/4. Catalyzes the NADPH-dependent reduction of N-acetyl-5-glutamyl phosphate to yield N-acetyl-L-glutamate 5-semialdehyde. The polypeptide is N-acetyl-gamma-glutamyl-phosphate reductase (Acinetobacter baumannii (strain ACICU)).